A 68-amino-acid chain; its full sequence is Phage-like element PBSX protein XtrA (68 aa).

To B.subtilis YqaO.

The polypeptide is Phage-like element PBSX protein XtrA (xtrA) (Bacillus subtilis (strain 168)).